A 432-amino-acid polypeptide reads, in one-letter code: Adenylosuccinate synthetase (432 aa).

GTP contacts are provided by residues 13 to 19 (GDEGKGK) and 41 to 43 (GHT). D14 acts as the Proton acceptor in catalysis. Mg(2+) is bound by residues D14 and G41. Residues 14-17 (DEGK), 39-42 (NAGH), T130, R144, Q225, T240, and R304 contribute to the IMP site. H42 functions as the Proton donor in the catalytic mechanism. 300-306 (STTGRPR) lines the substrate pocket. GTP is bound by residues R306, 332-334 (KLD), and 416-418 (STG).

Belongs to the adenylosuccinate synthetase family. As to quaternary structure, homodimer. Requires Mg(2+) as cofactor.

Its subcellular location is the cytoplasm. It catalyses the reaction IMP + L-aspartate + GTP = N(6)-(1,2-dicarboxyethyl)-AMP + GDP + phosphate + 2 H(+). The protein operates within purine metabolism; AMP biosynthesis via de novo pathway; AMP from IMP: step 1/2. Functionally, plays an important role in the de novo pathway of purine nucleotide biosynthesis. Catalyzes the first committed step in the biosynthesis of AMP from IMP. The sequence is that of Adenylosuccinate synthetase from Nitrosomonas europaea (strain ATCC 19718 / CIP 103999 / KCTC 2705 / NBRC 14298).